The sequence spans 309 residues: ATP synthase gamma chain (309 aa).

This sequence belongs to the ATPase gamma chain family. F-type ATPases have 2 components, CF(1) - the catalytic core - and CF(0) - the membrane proton channel. CF(1) has five subunits: alpha(3), beta(3), gamma(1), delta(1), epsilon(1). CF(0) has three main subunits: a, b and c.

It localises to the cell membrane. In terms of biological role, produces ATP from ADP in the presence of a proton gradient across the membrane. The gamma chain is believed to be important in regulating ATPase activity and the flow of protons through the CF(0) complex. In Ligilactobacillus salivarius (strain UCC118) (Lactobacillus salivarius), this protein is ATP synthase gamma chain.